Consider the following 21-residue polypeptide: 71 kDa F-actin-binding protein (21 aa).

This sequence to yeast fimbrin. In terms of processing, the N-terminus is blocked.

In terms of biological role, binds directly to F-actin and induces actin filament bundling. May function as a regulator of actin filament organization. This is 71 kDa F-actin-binding protein from Tetrahymena pyriformis.